The following is a 218-amino-acid chain: uncharacterized protein (218 aa).

The protein belongs to the HAD-like hydrolase superfamily.

The protein resides in the cytoplasm. Its subcellular location is the nucleus. This is an uncharacterized protein from Saccharomyces cerevisiae (strain ATCC 204508 / S288c) (Baker's yeast).